The chain runs to 451 residues: MGNLLGGVSFREPTTVEDCDSTWQTDSEPEPEEPGPGGGSEGPGQESEQPAQPPEQAGGRPGASPAPDEDAEAAGAEQGGDSTEATAKPKRSFYAARDLYKYRHQYPNFKDIRYQNDLSNLRFYKNKIPFKPDGVYIEEVLSKWKGDYEKLEHNHTYIQWLFPLREQGLNFYAKELTTYEIEEFKKTKEAIRRFLLAYKMMLEFFGIKLTDKTGNVARAVNWQERFQHLNESQHNYLRITRILKSLGELGYESFKSPLVKFILHEALVENTIPNIKQSALEYFVYTIRDRRERRKLLRFAQKHYTPSENFIWGPPRKEQSEGSKAQKMSSPLASSHNSQTSMHKKAKDSKNSSSAVHLNSKTAEDKKVAPKEPVEETDRPSPEPSNEAAKPRNTEKDSNAENMNSQPEKTVTTPTEKKESVSPENNEEGGNDNQDNENPGNTNCHDVVLVQ.

Disordered regions lie at residues 1-89 (MGNL…TAKP) and 308-451 (ENFI…VLVQ). Over residues 43 to 66 (PGQESEQPAQPPEQAGGRPGASPA) the composition is skewed to low complexity. The segment covering 322–341 (GSKAQKMSSPLASSHNSQTS) has biased composition (polar residues). Basic and acidic residues-rich tracts occupy residues 362–381 (TAED…DRPS) and 389–399 (AKPRNTEKDSN). Residues 431-443 (NDNQDNENPGNTN) are compositionally biased toward low complexity.

Belongs to the opioid growth factor receptor family. In terms of tissue distribution, ubiquitous.

This chain is Opioid growth factor receptor-like protein 1 (OGFRL1), found in Homo sapiens (Human).